We begin with the raw amino-acid sequence, 206 residues long: Enterobactin synthase component D (206 aa).

3 residues coordinate Mg(2+): Asp107, Glu109, and Glu152.

Belongs to the P-Pant transferase superfamily. EntD family. EntB, EntD, EntE, and EntF form a multienzyme complex called enterobactin synthase. Requires Mg(2+) as cofactor.

Its subcellular location is the membrane. The catalysed reaction is apo-[aryl-carrier protein] + CoA = holo-[aryl-carrier protein] + adenosine 3',5'-bisphosphate + H(+). It carries out the reaction apo-[peptidyl-carrier protein] + CoA = holo-[peptidyl-carrier protein] + adenosine 3',5'-bisphosphate + H(+). Its pathway is siderophore biosynthesis; enterobactin biosynthesis. Its function is as follows. Involved in the biosynthesis of the siderophore enterobactin (enterochelin), which is a macrocyclic trimeric lactone of N-(2,3-dihydroxybenzoyl)-serine. The serine trilactone serves as a scaffolding for the three catechol functionalities that provide hexadentate coordination for the tightly ligated iron(2+) atoms. Plays an essential role in the assembly of the enterobactin by catalyzing the transfer of the 4'-phosphopantetheine (Ppant) moiety from coenzyme A to the apo-domains of both EntB (ArCP domain) and EntF (PCP domain) to yield their holo-forms which make them competent for the activation of 2,3-dihydroxybenzoate (DHB) and L-serine, respectively. The sequence is that of Enterobactin synthase component D from Escherichia coli O157:H7.